The following is a 235-amino-acid chain: MKRYRTLLFDVDDTILDFQAAEALALRLLFEDQNIPLTNDMKAQYKTINQGLWRAFEEGKMTRDEVVNTRFSALLKEYGYEADGALLEQKYRRFLEEGHQLIDGAFDLISNLQQQFDLYIVTNGVSHTQYKRLRDSGLFPFFKDIFVSEDTGFQKPMKEYFNYVFERIPQFSAEHTLIIGDSLTADIKGGQLAGLDTCWMNPDMKPNVPEIIPTYEIRKLEELYHILNIENTVSC.

Aspartate 10 functions as the Nucleophile in the catalytic mechanism.

This sequence belongs to the HAD-like hydrolase superfamily. YjjG family.

This is Putative HAD-hydrolase YfnB (yfnB) from Bacillus subtilis (strain 168).